The sequence spans 829 residues: Periplasmic nitrate reductase (829 aa).

A signal peptide (tat-type signal) is located at residues 1-30; that stretch reads MKMTRRAFVKANAAASAAAVAGITLPASAA. One can recognise a 4Fe-4S Mo/W bis-MGD-type domain in the interval 41–97; that stretch reads ITWDKAPCRFCGTGCSVLVGTQNGKVVATQGDPEAPVNKGLNCIKGYFLSKIMYGQD. Residues cysteine 48, cysteine 51, cysteine 55, and cysteine 83 each contribute to the [4Fe-4S] cluster site. Mo-bis(molybdopterin guanine dinucleotide) contacts are provided by residues lysine 85, glutamine 152, asparagine 177, cysteine 181, 214 to 221, 245 to 249, 264 to 266, methionine 374, glutamine 378, asparagine 484, 510 to 511, lysine 533, aspartate 560, and 718 to 727; these read WGSNMAEM, STYYH, QSD, SD, and TGRVLEHWHT. Phenylalanine 794 contributes to the substrate binding site. Mo-bis(molybdopterin guanine dinucleotide) is bound by residues asparagine 802 and lysine 819.

Belongs to the prokaryotic molybdopterin-containing oxidoreductase family. NasA/NapA/NarB subfamily. In terms of assembly, component of the periplasmic nitrate reductase NapAB complex composed of NapA and NapB. It depends on [4Fe-4S] cluster as a cofactor. Mo-bis(molybdopterin guanine dinucleotide) serves as cofactor. Predicted to be exported by the Tat system. The position of the signal peptide cleavage has not been experimentally proven.

The protein localises to the periplasm. The catalysed reaction is 2 Fe(II)-[cytochrome] + nitrate + 2 H(+) = 2 Fe(III)-[cytochrome] + nitrite + H2O. Catalytic subunit of the periplasmic nitrate reductase complex NapAB. Receives electrons from NapB and catalyzes the reduction of nitrate to nitrite. The protein is Periplasmic nitrate reductase of Vibrio parahaemolyticus serotype O3:K6 (strain RIMD 2210633).